The following is a 172-amino-acid chain: Crossover junction endodeoxyribonuclease RuvC (172 aa).

Active-site residues include aspartate 7, glutamate 68, and aspartate 141. 3 residues coordinate Mg(2+): aspartate 7, glutamate 68, and aspartate 141.

Belongs to the RuvC family. Homodimer which binds Holliday junction (HJ) DNA. The HJ becomes 2-fold symmetrical on binding to RuvC with unstacked arms; it has a different conformation from HJ DNA in complex with RuvA. In the full resolvosome a probable DNA-RuvA(4)-RuvB(12)-RuvC(2) complex forms which resolves the HJ. Mg(2+) serves as cofactor.

The protein localises to the cytoplasm. It carries out the reaction Endonucleolytic cleavage at a junction such as a reciprocal single-stranded crossover between two homologous DNA duplexes (Holliday junction).. The RuvA-RuvB-RuvC complex processes Holliday junction (HJ) DNA during genetic recombination and DNA repair. Endonuclease that resolves HJ intermediates. Cleaves cruciform DNA by making single-stranded nicks across the HJ at symmetrical positions within the homologous arms, yielding a 5'-phosphate and a 3'-hydroxyl group; requires a central core of homology in the junction. The consensus cleavage sequence is 5'-(A/T)TT(C/G)-3'. Cleavage occurs on the 3'-side of the TT dinucleotide at the point of strand exchange. HJ branch migration catalyzed by RuvA-RuvB allows RuvC to scan DNA until it finds its consensus sequence, where it cleaves and resolves the cruciform DNA. In Frankia casuarinae (strain DSM 45818 / CECT 9043 / HFP020203 / CcI3), this protein is Crossover junction endodeoxyribonuclease RuvC.